The chain runs to 173 residues: ATP synthase subunit b (173 aa).

Residues G15–L35 form a helical membrane-spanning segment.

It belongs to the ATPase B chain family. In terms of assembly, F-type ATPases have 2 components, F(1) - the catalytic core - and F(0) - the membrane proton channel. F(1) has five subunits: alpha(3), beta(3), gamma(1), delta(1), epsilon(1). F(0) has three main subunits: a(1), b(2) and c(10-14). The alpha and beta chains form an alternating ring which encloses part of the gamma chain. F(1) is attached to F(0) by a central stalk formed by the gamma and epsilon chains, while a peripheral stalk is formed by the delta and b chains.

Its subcellular location is the cell membrane. Its function is as follows. F(1)F(0) ATP synthase produces ATP from ADP in the presence of a proton or sodium gradient. F-type ATPases consist of two structural domains, F(1) containing the extramembraneous catalytic core and F(0) containing the membrane proton channel, linked together by a central stalk and a peripheral stalk. During catalysis, ATP synthesis in the catalytic domain of F(1) is coupled via a rotary mechanism of the central stalk subunits to proton translocation. In terms of biological role, component of the F(0) channel, it forms part of the peripheral stalk, linking F(1) to F(0). The chain is ATP synthase subunit b from Staphylococcus aureus (strain MSSA476).